Here is a 184-residue protein sequence, read N- to C-terminus: ATP synthase subunit b 1 (184 aa).

A helical membrane pass occupies residues 4–24 (LSILAVLAASPAMAATGPFLS).

It belongs to the ATPase B chain family. As to quaternary structure, F-type ATPases have 2 components, F(1) - the catalytic core - and F(0) - the membrane proton channel. F(1) has five subunits: alpha(3), beta(3), gamma(1), delta(1), epsilon(1). F(0) has three main subunits: a(1), b(2) and c(10-14). The alpha and beta chains form an alternating ring which encloses part of the gamma chain. F(1) is attached to F(0) by a central stalk formed by the gamma and epsilon chains, while a peripheral stalk is formed by the delta and b chains.

The protein resides in the cell inner membrane. F(1)F(0) ATP synthase produces ATP from ADP in the presence of a proton or sodium gradient. F-type ATPases consist of two structural domains, F(1) containing the extramembraneous catalytic core and F(0) containing the membrane proton channel, linked together by a central stalk and a peripheral stalk. During catalysis, ATP synthesis in the catalytic domain of F(1) is coupled via a rotary mechanism of the central stalk subunits to proton translocation. In terms of biological role, component of the F(0) channel, it forms part of the peripheral stalk, linking F(1) to F(0). The protein is ATP synthase subunit b 1 of Cereibacter sphaeroides (strain ATCC 17029 / ATH 2.4.9) (Rhodobacter sphaeroides).